Consider the following 644-residue polypeptide: uncharacterized protein (644 aa).

The disordered stretch occupies residues 1–39 (MKANGLDNDPARTRMERTDIDSEHPEAQPLLNNNHRTLG). The Cytoplasmic portion of the chain corresponds to 1 to 90 (MKANGLDNDP…ILNILILINT (90 aa)). Basic and acidic residues predominate over residues 9 to 26 (DPARTRMERTDIDSEHPE). Residues serine 22, serine 56, and serine 63 each carry the phosphoserine modification. Residues 91 to 111 (IWLVTTLISDFFFNINILFGF) traverse the membrane as a helical segment. Residues 112 to 122 (SNRYASFNDLT) are Vacuolar-facing. A helical transmembrane segment spans residues 123–143 (LIFISIIANSFNLWFNKLGLY). Residues 144 to 147 (SALD) are Cytoplasmic-facing. The chain crosses the membrane as a helical span at residues 148 to 168 (YSLNVTLCVLTLFNLALTYLI). Over 169–174 (KYTRQR) the chain is Vacuolar. Residues 175–195 (IGFVGTFTYLWTSFSFFIGAI) form a helical membrane-spanning segment. The Cytoplasmic portion of the chain corresponds to 196 to 271 (LDWYLLFYNN…EWVSIGFRNT (76 aa)). The disordered stretch occupies residues 225–251 (NENHTNSTENRDRSQYGSGSPTPTHRS). Polar residues predominate over residues 239 to 251 (QYGSGSPTPTHRS). Position 244 is a phosphoserine (serine 244). A helical transmembrane segment spans residues 272-292 (IKFLILIFFALFTLNTLLTTL). Residues 293-644 (DTYRLTHKLP…IGELGKLTED (352 aa)) are Vacuolar-facing. Positions 348-619 (PIILFEHGGY…IVEGGHEIYK (272 aa)) constitute an AB hydrolase-1 domain. The tract at residues 469-492 (GRGDGDDGDDGNGNDGDGRNHDKT) is disordered.

The protein localises to the vacuole membrane. This is an uncharacterized protein from Saccharomyces cerevisiae (strain YJM789) (Baker's yeast).